A 2483-amino-acid chain; its full sequence is Cation-independent mannose-6-phosphate receptor (2483 aa).

An N-terminal signal peptide occupies residues M1–A35. The Lumenal portion of the chain corresponds to Q36–A2295. 9 MRH domains span residues A42–K158, V167–R315, E321–K463, L468–L613, E619–E755, L758–I917, Q925–P1072, V1075–V1212, and D1218–P1356. 2 disulfide bridges follow: C44–C64 and C72–C79. A glycan (N-linked (GlcNAc...) asparagine) is linked at N107. 8 disulfides stabilise this stretch: C112/C144, C129/C156, C169/C207, C223/C230, C270/C301, C283/C313, C323/C361, and C369/C377. 2 N-linked (GlcNAc...) asparagine glycosylation sites follow: N395 and N430. Cystine bridges form between C415–C449, C429–C461, C470–C513, and C525–C532. Residues N537 and N575 are each glycosylated (N-linked (GlcNAc...) asparagine). 2 cysteine pairs are disulfide-bonded: C566–C599 and C580–C611. N-linked (GlcNAc...) asparagine glycosylation occurs at N620. 5 disulfide bridges follow: C621/C658, C666/C673, C724/C753, C760/C807, and C816/C823. An N-linked (GlcNAc...) asparagine glycan is attached at N740. N-linked (GlcNAc...) asparagine glycosylation is present at N864. 7 disulfide bridges follow: C868–C903, C886–C915, C927–C964, C970–C981, C1035–C1070, C1077–C1118, and C1127–C1135. A glycan (N-linked (GlcNAc...) asparagine) is linked at N944. N1157 carries an N-linked (GlcNAc...) asparagine glycan. Disulfide bonds link C1170–C1198, C1183–C1210, C1220–C1255, and C1263–C1275. N1239 carries an N-linked (GlcNAc...) asparagine glycan. N1305 carries an N-linked (GlcNAc...) asparagine glycan. Cystine bridges form between C1312–C1342 and C1326–C1354. N-linked (GlcNAc...) asparagine glycosylation occurs at N1358. MRH domains lie at T1360–V1501, D1507–Q1641, T1643–D1790, Q1795–P1982, M1985–V2120, and V2128–L2273. Cystine bridges form between C1362–C1401 and C1413–C1420. An N-linked (GlcNAc...) asparagine glycan is attached at N1423. 20 disulfide bridges follow: C1454/C1487, C1469/C1499, C1509/C1546, C1552/C1559, C1591/C1627, C1607/C1639, C1645/C1688, C1699/C1706, C1743/C1776, C1759/C1788, C1797/C1832, C1843/C1849, C1886/C1968, C1896/C1920, C1910/C1935, C1950/C1980, C1987/C2022, C2032/C2039, C2075/C2106, and C2089/C2118. A glycan (N-linked (GlcNAc...) asparagine) is linked at N1532. An N-linked (GlcNAc...) asparagine glycan is attached at N1649. An N-linked (GlcNAc...) asparagine glycan is attached at N1750. N1809 carries N-linked (GlcNAc...) asparagine glycosylation. The Fibronectin type-II domain occupies D1891–Q1937. N2078 carries N-linked (GlcNAc...) asparagine glycosylation. An N-linked (GlcNAc...) asparagine glycan is attached at N2129. Intrachain disulfides connect C2181/C2187, C2225/C2259, and C2241/C2271. A helical membrane pass occupies residues V2296–L2316. The Cytoplasmic portion of the chain corresponds to H2317–I2483. Position 2342 is an N6-acetyllysine (K2342). S2401 carries the phosphoserine modification. The disordered stretch occupies residues S2415–I2483. R2417 carries the post-translational modification Omega-N-methylarginine. 2 stretches are compositionally biased toward basic and acidic residues: residues V2434–A2451 and S2471–I2483. A phosphoserine mark is found at S2471 and S2476.

It belongs to the MRL1/IGF2R family. As to quaternary structure, binds HA-I and HA-II plasma membrane adapters. Interacts with DPP4; the interaction is direct. Binds GGA1, GGA2 and GGA3. Interacts with the heterotrimeric retromer cargo-selective complex (CSC), formed by VPS26 (VPS26A or VPS26B), VPS29 and VPS35; which is involved in retrograde trafficking of the receptor from endosomes to the Golgi apparatus. In terms of processing, palmitoylated. Undergoes cysteine S-palmitoylation which promotes interaction with the retromer cargo-selective complex which mediates its retrograde trafficking to the Golgi apparatus.

Its subcellular location is the golgi apparatus membrane. The protein localises to the endosome membrane. Its function is as follows. Mediates the transport of phosphorylated lysosomal enzymes from the Golgi complex and the cell surface to lysosomes. Lysosomal enzymes bearing phosphomannosyl residues bind specifically to mannose-6-phosphate receptors in the Golgi apparatus and the resulting receptor-ligand complex is transported to an acidic prelysosomal compartment where the low pH mediates the dissociation of the complex. The receptor is then recycled back to the Golgi for another round of trafficking through its binding to the retromer. This receptor also binds IGF2. Acts as a positive regulator of T-cell coactivation by binding DPP4. In Mus musculus (Mouse), this protein is Cation-independent mannose-6-phosphate receptor (Igf2r).